The sequence spans 198 residues: Superoxide dismutase [Mn], mitochondrial (198 aa).

Residue H26 coordinates Mn(2+). Y34 is subject to 3'-nitrotyrosine. An N6-acetyllysine; alternate mark is found at K44 and K51. An N6-succinyllysine; alternate mark is found at K44 and K51. H74 serves as a coordination point for Mn(2+). K90 carries the N6-acetyllysine modification. N6-acetyllysine; alternate occurs at positions 98 and 106. K98 and K106 each carry N6-succinyllysine; alternate. 2 residues coordinate Mn(2+): D159 and H163. K178 is modified (N6-acetyllysine).

Belongs to the iron/manganese superoxide dismutase family. In terms of assembly, homotetramer. The cofactor is Mn(2+). In terms of processing, nitrated under oxidative stress. Nitration coupled with oxidation inhibits the catalytic activity. Acetylation at Lys-98 decreases enzymatic activity. Deacetylated by SIRT3 upon exposure to ionizing radiations or after long fasting. Post-translationally, polyubiquitinated; leading to proteasomal degradation. Deubiquitinated by USP36 which increases protein stability.

The protein localises to the mitochondrion matrix. It carries out the reaction 2 superoxide + 2 H(+) = H2O2 + O2. Functionally, destroys superoxide anion radicals which are normally produced within the cells and which are toxic to biological systems. The sequence is that of Superoxide dismutase [Mn], mitochondrial (SOD2) from Macaca fuscata fuscata (Japanese macaque).